The chain runs to 210 residues: Holliday junction branch migration complex subunit RuvA (210 aa).

The tract at residues 1–64 (MIGLIEGRVC…EDAQLLYGFL (64 aa)) is domain I. The domain II stretch occupies residues 65-143 (HPTERDVFRQ…HIQSDMSLLT (79 aa)). The tract at residues 144-154 (EVEQQIGIAAN) is flexible linker. The interval 155 to 210 (SEGVILAEVESALISLGYRDKEAQQAIKAARETDAGQQLVDTQSLLKLTLKQLSNF) is domain III.

The protein belongs to the RuvA family. Homotetramer. Forms an RuvA(8)-RuvB(12)-Holliday junction (HJ) complex. HJ DNA is sandwiched between 2 RuvA tetramers; dsDNA enters through RuvA and exits via RuvB. An RuvB hexamer assembles on each DNA strand where it exits the tetramer. Each RuvB hexamer is contacted by two RuvA subunits (via domain III) on 2 adjacent RuvB subunits; this complex drives branch migration. In the full resolvosome a probable DNA-RuvA(4)-RuvB(12)-RuvC(2) complex forms which resolves the HJ.

It localises to the cytoplasm. Functionally, the RuvA-RuvB-RuvC complex processes Holliday junction (HJ) DNA during genetic recombination and DNA repair, while the RuvA-RuvB complex plays an important role in the rescue of blocked DNA replication forks via replication fork reversal (RFR). RuvA specifically binds to HJ cruciform DNA, conferring on it an open structure. The RuvB hexamer acts as an ATP-dependent pump, pulling dsDNA into and through the RuvAB complex. HJ branch migration allows RuvC to scan DNA until it finds its consensus sequence, where it cleaves and resolves the cruciform DNA. This Psychrobacter sp. (strain PRwf-1) protein is Holliday junction branch migration complex subunit RuvA.